We begin with the raw amino-acid sequence, 158 residues long: Transcription elongation factor GreB (158 aa).

Belongs to the GreA/GreB family. GreB subfamily.

In terms of biological role, necessary for efficient RNA polymerase transcription elongation past template-encoded arresting sites. The arresting sites in DNA have the property of trapping a certain fraction of elongating RNA polymerases that pass through, resulting in locked ternary complexes. Cleavage of the nascent transcript by cleavage factors such as GreA or GreB allows the resumption of elongation from the new 3'terminus. GreB releases sequences of up to 9 nucleotides in length. The sequence is that of Transcription elongation factor GreB from Escherichia coli O157:H7.